The primary structure comprises 954 residues: Glycine dehydrogenase (decarboxylating) (954 aa).

Position 701 is an N6-(pyridoxal phosphate)lysine (lysine 701).

This sequence belongs to the GcvP family. The glycine cleavage system is composed of four proteins: P, T, L and H. The cofactor is pyridoxal 5'-phosphate.

The enzyme catalyses N(6)-[(R)-lipoyl]-L-lysyl-[glycine-cleavage complex H protein] + glycine + H(+) = N(6)-[(R)-S(8)-aminomethyldihydrolipoyl]-L-lysyl-[glycine-cleavage complex H protein] + CO2. Its function is as follows. The glycine cleavage system catalyzes the degradation of glycine. The P protein binds the alpha-amino group of glycine through its pyridoxal phosphate cofactor; CO(2) is released and the remaining methylamine moiety is then transferred to the lipoamide cofactor of the H protein. The chain is Glycine dehydrogenase (decarboxylating) from Bordetella parapertussis (strain 12822 / ATCC BAA-587 / NCTC 13253).